Here is a 158-residue protein sequence, read N- to C-terminus: Antitoxin TacA (158 aa).

It belongs to the TacA antitoxin family. In terms of assembly, forms a complex with cognate toxin TacT.

Functionally, antitoxin component of a type II toxin-antitoxin (TA) system. Counteracts the toxic effect of cognate toxin TacT. Its function is as follows. TacA-TacT both represses and derepresses expression of its own operon. In Mycobacterium tuberculosis (strain ATCC 25618 / H37Rv), this protein is Antitoxin TacA.